Here is a 263-residue protein sequence, read N- to C-terminus: Small ribosomal subunit protein uS2 (263 aa).

Residues 228-263 form a disordered region; the sequence is QLEEPEADLADEDDNGMTTSDDGDAEALDIPDDSDA. Positions 230-263 are enriched in acidic residues; that stretch reads EEPEADLADEDDNGMTTSDDGDAEALDIPDDSDA.

This sequence belongs to the universal ribosomal protein uS2 family.

In Thermosynechococcus vestitus (strain NIES-2133 / IAM M-273 / BP-1), this protein is Small ribosomal subunit protein uS2.